Here is a 1124-residue protein sequence, read N- to C-terminus: MDAHEDYVWPRATSELILLPVTGLECVGERLLAGEGPDVLVYTLDFGGHLRMMKRVQNLLGHYLIHGFRVRPEPNGDLDSEVMVAAFGSKGLRIVKISWGQGRFRELWRSGLWNMSDWIWDARWLEGNIALALGHNSVVLYDPVVGCSLQDVPCTDRCTLSSACLIGDTWKELTVVAGAVSNQLLVWYPAAALTDDKPVVPDRRVSGHVGVIFSMSYLESKGLLATASEDRSVRIWKVGDLRVPGGRVQNIGHCFGHSARVWQVKLLENYLISAGEDCVCLVWSHEGEILQAFRGHQGRGIRALAAHERQAWVITGGDDSGIRLWHLVGRGHPGSGVFALSFKSHSRPGVLKAVTLAGSWRVLAVTDAGALYLYDLEVKCWEQLLEDKRFQSYCLLEAAPGPEGFGLCALANGEGRVKVVPINTPTAAVDLTLFPGKVHSLSWALRGYEELLLLASGPGGVVACLEISAAPSGKAIFVKERCRYLLPPSKQRWHTCSAFLPPGDFLVCGDRRGSVLLYPSRPDLLKDLGVVSKVGAITSAPGAGSGEGEPSLAEWGPMSTLPSLHGKQGVTSVTCHGGYVYTTGRDGSYYQLFVRGGQLQPVLRQKPCRGMNWVAGVRMVADGNMVILGFHANEFVVWSPRSHEKLHIINCGGGHRSWAFSDTEAAMAFAYLKDGDVMLYRALGGCTRPHVILRESLHGREITCVKRVGSITLGPESGVPSFLQPDHLEPGEPVEPGSEGPGLIDIVITCSEDTTVCVLALPTATGSAHALTAVCNHISSVRAVAVWGVGTPGGPQDPQPGLTAHVVSAGGRAEMHCFTIMVTPDPSPPSRLACHVMHLSSHRLDEYWDRQRHRHRMIKVDPETRYMSLAVCELDRPGLGPLVAAACSDGAVRLFLLQDSGRRLQLLAETSHHKRCVLKVHAFTHEAPNRRRRLFLCSAATDGSLAFWDLTTMLDQDSPALEAAADLGLPFQLGSPCLTVQAHSCGVNSLHTLPTREGHLVASGSEDGSLHVFVLAVEMPELEEAVGGAELLPQLQVLEEYSVPCAHAAHVTGLKILSRSLMVSASIDQRLTFWRLGHGEPTFMNSTVYHVADVADMDCWPVSPEFGHRCALGGQGLEVYNWYD.

Position 1 is an N-acetylmethionine (Met-1). WD repeat units lie at residues 53–97, 105–143, 147–189, 200–238, 247–285, 289–327, 335–376, 381–422, 425–470, 476–520, 557–596, 602–640, 643–682, 743–789, 852–897, 905–950, 974–1015, 1039–1076, and 1082–1124; these read MKRV…IVKI, RELW…LYDP, CSLQ…VWYP, VPDR…IWKV, RVQN…VWSH, ILQA…LWHL, SGVF…LYDL, WEQL…VVPI, PTAA…ISAA, IFVK…LYPS, PMST…FVRG, VLRQ…VWSP, HEKL…LYRA, LIDI…VWGV, RHRH…LFLL, QLLA…FWDL, GSPC…VFVL, EEYS…FWRL, and TFMN…NWYD.

This sequence belongs to the WD repeat WDR6 family. In terms of assembly, interacts with FTSJ1; the interaction is direct, and required for 2'-O-methylation of position 34 in substrate tRNAs. Interacts with IRS4. Interacts with STK11/LKB1.

The protein localises to the cytoplasm. Functionally, together with methyltransferase FTSJ1, methylates the 2'-O-ribose of nucleotides at position 34 of the tRNA anticodon loop of substrate tRNAs. Required for the correct positioning of the substrate tRNA for methylation. Required to suppress amino acid starvation-induced autophagy. Enhances the STK11/LKB1-induced cell growth suppression activity. The polypeptide is tRNA (34-2'-O)-methyltransferase regulator WDR6 (WDR6) (Bos taurus (Bovine)).